We begin with the raw amino-acid sequence, 337 residues long: Ketol-acid reductoisomerase (NADP(+)) (337 aa).

In terms of domain architecture, KARI N-terminal Rossmann spans 3 to 183 (VEMFYDDDAD…GGTRAGVIKT (181 aa)). NADP(+)-binding positions include 26 to 29 (YGSQ), K49, S52, S54, and 84 to 87 (DTAQ). H109 is a catalytic residue. Position 135 (G135) interacts with NADP(+). The 146-residue stretch at 184-329 (TFKEETETDL…KKLRDLMSWV (146 aa)) folds into the KARI C-terminal knotted domain. Positions 192, 196, 228, and 232 each coordinate Mg(2+). S253 is a substrate binding site.

The protein belongs to the ketol-acid reductoisomerase family. Requires Mg(2+) as cofactor.

The enzyme catalyses (2R)-2,3-dihydroxy-3-methylbutanoate + NADP(+) = (2S)-2-acetolactate + NADPH + H(+). It catalyses the reaction (2R,3R)-2,3-dihydroxy-3-methylpentanoate + NADP(+) = (S)-2-ethyl-2-hydroxy-3-oxobutanoate + NADPH + H(+). The protein operates within amino-acid biosynthesis; L-isoleucine biosynthesis; L-isoleucine from 2-oxobutanoate: step 2/4. It functions in the pathway amino-acid biosynthesis; L-valine biosynthesis; L-valine from pyruvate: step 2/4. Its function is as follows. Involved in the biosynthesis of branched-chain amino acids (BCAA). Catalyzes an alkyl-migration followed by a ketol-acid reduction of (S)-2-acetolactate (S2AL) to yield (R)-2,3-dihydroxy-isovalerate. In the isomerase reaction, S2AL is rearranged via a Mg-dependent methyl migration to produce 3-hydroxy-3-methyl-2-ketobutyrate (HMKB). In the reductase reaction, this 2-ketoacid undergoes a metal-dependent reduction by NADPH to yield (R)-2,3-dihydroxy-isovalerate. The sequence is that of Ketol-acid reductoisomerase (NADP(+)) from Rhodococcus jostii (strain RHA1).